A 191-amino-acid chain; its full sequence is Imidazoleglycerol-phosphate dehydratase (191 aa).

This sequence belongs to the imidazoleglycerol-phosphate dehydratase family.

It localises to the cytoplasm. It catalyses the reaction D-erythro-1-(imidazol-4-yl)glycerol 3-phosphate = 3-(imidazol-4-yl)-2-oxopropyl phosphate + H2O. The protein operates within amino-acid biosynthesis; L-histidine biosynthesis; L-histidine from 5-phospho-alpha-D-ribose 1-diphosphate: step 6/9. The protein is Imidazoleglycerol-phosphate dehydratase of Methanosarcina barkeri (strain Fusaro / DSM 804).